We begin with the raw amino-acid sequence, 359 residues long: UDP-N-acetylglucosamine--N-acetylmuramyl-(pentapeptide) pyrophosphoryl-undecaprenol N-acetylglucosamine transferase (359 aa).

UDP-N-acetyl-alpha-D-glucosamine-binding positions include 14-16 (TGG), Asn126, Arg166, Ser194, Ile248, and Gln293.

This sequence belongs to the glycosyltransferase 28 family. MurG subfamily.

The protein localises to the cell inner membrane. The catalysed reaction is di-trans,octa-cis-undecaprenyl diphospho-N-acetyl-alpha-D-muramoyl-L-alanyl-D-glutamyl-meso-2,6-diaminopimeloyl-D-alanyl-D-alanine + UDP-N-acetyl-alpha-D-glucosamine = di-trans,octa-cis-undecaprenyl diphospho-[N-acetyl-alpha-D-glucosaminyl-(1-&gt;4)]-N-acetyl-alpha-D-muramoyl-L-alanyl-D-glutamyl-meso-2,6-diaminopimeloyl-D-alanyl-D-alanine + UDP + H(+). The protein operates within cell wall biogenesis; peptidoglycan biosynthesis. In terms of biological role, cell wall formation. Catalyzes the transfer of a GlcNAc subunit on undecaprenyl-pyrophosphoryl-MurNAc-pentapeptide (lipid intermediate I) to form undecaprenyl-pyrophosphoryl-MurNAc-(pentapeptide)GlcNAc (lipid intermediate II). This is UDP-N-acetylglucosamine--N-acetylmuramyl-(pentapeptide) pyrophosphoryl-undecaprenol N-acetylglucosamine transferase from Verminephrobacter eiseniae (strain EF01-2).